The following is a 343-amino-acid chain: Aspartate carbamoyltransferase catalytic subunit (343 aa).

The carbamoyl phosphate site is built by R91 and T92. K119 contributes to the L-aspartate binding site. Carbamoyl phosphate contacts are provided by R141, H171, and Q174. 2 residues coordinate L-aspartate: R204 and R259. G300 and P301 together coordinate carbamoyl phosphate.

It belongs to the aspartate/ornithine carbamoyltransferase superfamily. ATCase family. As to quaternary structure, heterododecamer (2C3:3R2) of six catalytic PyrB chains organized as two trimers (C3), and six regulatory PyrI chains organized as three dimers (R2).

It catalyses the reaction carbamoyl phosphate + L-aspartate = N-carbamoyl-L-aspartate + phosphate + H(+). It participates in pyrimidine metabolism; UMP biosynthesis via de novo pathway; (S)-dihydroorotate from bicarbonate: step 2/3. Functionally, catalyzes the condensation of carbamoyl phosphate and aspartate to form carbamoyl aspartate and inorganic phosphate, the committed step in the de novo pyrimidine nucleotide biosynthesis pathway. The sequence is that of Aspartate carbamoyltransferase catalytic subunit from Burkholderia orbicola (strain MC0-3).